The sequence spans 394 residues: Elongation factor Tu (394 aa).

The tr-type G domain occupies 10-204 (KPHVNIGTIG…AVDSWIPLPE (195 aa)). The interval 19–26 (GHVDHGKT) is G1. 19-26 (GHVDHGKT) contributes to the GTP binding site. Thr26 is a Mg(2+) binding site. The tract at residues 60–64 (GITIN) is G2. Positions 81–84 (DCPG) are G3. GTP is bound by residues 81-85 (DCPGH) and 136-139 (NKCD). Positions 136–139 (NKCD) are G4. A G5 region spans residues 174-176 (SGL).

Belongs to the TRAFAC class translation factor GTPase superfamily. Classic translation factor GTPase family. EF-Tu/EF-1A subfamily. Monomer.

The protein localises to the cytoplasm. It carries out the reaction GTP + H2O = GDP + phosphate + H(+). GTP hydrolase that promotes the GTP-dependent binding of aminoacyl-tRNA to the A-site of ribosomes during protein biosynthesis. This chain is Elongation factor Tu, found in Ureaplasma parvum serovar 3 (strain ATCC 27815 / 27 / NCTC 11736).